Here is a 62-residue protein sequence, read N- to C-terminus: Large ribosomal subunit protein eL24 (62 aa).

Zn(2+) contacts are provided by Cys-7, Cys-10, Cys-33, and Cys-37. A C4-type zinc finger spans residues 7–37 (CSFCGREIEPGTGIMYVKNDGSILWFCSRKC).

Belongs to the eukaryotic ribosomal protein eL24 family. As to quaternary structure, part of the 50S ribosomal subunit. Forms a cluster with proteins L3 and L14. Zn(2+) is required as a cofactor.

Binds to the 23S rRNA. This is Large ribosomal subunit protein eL24 from Staphylothermus marinus (strain ATCC 43588 / DSM 3639 / JCM 9404 / F1).